The chain runs to 580 residues: Negative elongation factor B (580 aa).

Lysine 519 is modified (N6-acetyllysine). Residues leucine 548–leucine 580 form a disordered region. Serine 557 carries the phosphoserine modification.

It belongs to the NELF-B family. As to quaternary structure, the NELF complex is composed of NELFA, NELFB, NELFCD (isoform NELF-C or isoform NELF-D) and NELFE; the N-terminus of NELFB binds to the NELFA:NELFCD subcomplex. Binds RNA which may help to stabilize the NELF complex on nucleic acid. Interacts with the first BRCT repeat of BRCA1. Interacts with KIAA1191. Interacts with NELFE. As to expression, widely expressed. Expressed in heart, brain, lung, placenta, liver, skeletal muscle, kidney and pancreas.

The protein localises to the nucleus. Essential component of the NELF complex, a complex that negatively regulates the elongation of transcription by RNA polymerase II. The NELF complex, which acts via an association with the DSIF complex and causes transcriptional pausing, is counteracted by the P-TEFb kinase complex. May be able to induce chromatin unfolding. Essential for early embryogenesis; plays an important role in maintaining the undifferentiated state of embryonic stem cells (ESCs) by preventing unscheduled expression of developmental genes. Plays a key role in establishing the responsiveness of stem cells to developmental cues; facilitates plasticity and cell fate commitment in ESCs by establishing the appropriate expression level of signaling molecules. Supports the transcription of genes involved in energy metabolism in cardiomyocytes; facilitates the association of transcription initiation factors with the promoters of the metabolism-related genes. Its function is as follows. (Microbial infection) The NELF complex is involved in HIV-1 latency possibly involving recruitment of PCF11 to paused RNA polymerase II. In vitro, binds weakly to the HIV-1 TAR RNA which is located in the long terminal repeat (LTR) of HIV-1. In Homo sapiens (Human), this protein is Negative elongation factor B (NELFB).